We begin with the raw amino-acid sequence, 303 residues long: Light-independent protochlorophyllide reductase iron-sulfur ATP-binding protein (303 aa).

A disordered region spans residues 1 to 24 (MSSVLERPAAPAILPSRQDGEGSV). Residues 47 to 52 (GIGKST) and Lys-76 each bind ATP. A Mg(2+)-binding site is contributed by Ser-51. [4Fe-4S] cluster is bound by residues Cys-132 and Cys-166. Residues 217-218 (NR) and 241-243 (PDL) each bind ATP.

This sequence belongs to the NifH/BchL/ChlL family. Homodimer. Protochlorophyllide reductase is composed of three subunits; BchL, BchN and BchB. The cofactor is [4Fe-4S] cluster.

It catalyses the reaction chlorophyllide a + oxidized 2[4Fe-4S]-[ferredoxin] + 2 ADP + 2 phosphate = protochlorophyllide a + reduced 2[4Fe-4S]-[ferredoxin] + 2 ATP + 2 H2O. It functions in the pathway porphyrin-containing compound metabolism; bacteriochlorophyll biosynthesis (light-independent). Component of the dark-operative protochlorophyllide reductase (DPOR) that uses Mg-ATP and reduced ferredoxin to reduce ring D of protochlorophyllide (Pchlide) to form chlorophyllide a (Chlide). This reaction is light-independent. The L component serves as a unique electron donor to the NB-component of the complex, and binds Mg-ATP. The polypeptide is Light-independent protochlorophyllide reductase iron-sulfur ATP-binding protein (Rhodospirillum centenum (strain ATCC 51521 / SW)).